Consider the following 98-residue polypeptide: NADH-ubiquinone oxidoreductase chain 4L (98 aa).

The next 3 membrane-spanning stretches (helical) occupy residues 1–21 (MSMVYINIFLAFIMSLMGLLM), 29–49 (SLLCLEGMMLSLFIMMAVAIL), and 61–81 (IILLVFAACEAALGLSLLVMV).

Belongs to the complex I subunit 4L family. As to quaternary structure, core subunit of respiratory chain NADH dehydrogenase (Complex I) which is composed of 45 different subunits.

The protein localises to the mitochondrion inner membrane. The catalysed reaction is a ubiquinone + NADH + 5 H(+)(in) = a ubiquinol + NAD(+) + 4 H(+)(out). Functionally, core subunit of the mitochondrial membrane respiratory chain NADH dehydrogenase (Complex I) which catalyzes electron transfer from NADH through the respiratory chain, using ubiquinone as an electron acceptor. Part of the enzyme membrane arm which is embedded in the lipid bilayer and involved in proton translocation. This chain is NADH-ubiquinone oxidoreductase chain 4L (MT-ND4L), found in Felis catus (Cat).